A 539-amino-acid polypeptide reads, in one-letter code: Phosphoenolpyruvate carboxykinase (ATP) (539 aa).

Residues arginine 64, tyrosine 206, and lysine 212 each coordinate substrate. Residues lysine 212, histidine 231, and 247–255 each bind ATP; that span reads GLSGTGKTT. Mn(2+) is bound by residues lysine 212 and histidine 231. Mn(2+) is bound at residue aspartate 268. ATP-binding positions include glutamate 296, arginine 332, 448–449, and threonine 454; that span reads RI. Arginine 332 contacts substrate.

It belongs to the phosphoenolpyruvate carboxykinase (ATP) family. Monomer. Mn(2+) is required as a cofactor.

Its subcellular location is the cytoplasm. It catalyses the reaction oxaloacetate + ATP = phosphoenolpyruvate + ADP + CO2. The protein operates within carbohydrate biosynthesis; gluconeogenesis. Its function is as follows. Involved in the gluconeogenesis. Catalyzes the conversion of oxaloacetate (OAA) to phosphoenolpyruvate (PEP) through direct phosphoryl transfer between the nucleoside triphosphate and OAA. This is Phosphoenolpyruvate carboxykinase (ATP) from Yersinia pestis bv. Antiqua (strain Antiqua).